Here is a 502-residue protein sequence, read N- to C-terminus: AMP phosphorylase (502 aa).

AMP contacts are provided by residues Gly168, 195–200 (SRAITS), and Thr204. Asp257 (proton donor) is an active-site residue. Ser265 and Lys289 together coordinate AMP.

It belongs to the thymidine/pyrimidine-nucleoside phosphorylase family. Type 2 subfamily.

It carries out the reaction AMP + phosphate = alpha-D-ribose 1,5-bisphosphate + adenine. The catalysed reaction is CMP + phosphate = cytosine + alpha-D-ribose 1,5-bisphosphate. The enzyme catalyses UMP + phosphate = alpha-D-ribose 1,5-bisphosphate + uracil. Its function is as follows. Catalyzes the conversion of AMP and phosphate to adenine and ribose 1,5-bisphosphate (R15P). Exhibits phosphorylase activity toward CMP and UMP in addition to AMP. Functions in an archaeal AMP degradation pathway, together with R15P isomerase and RubisCO. This Hyperthermus butylicus (strain DSM 5456 / JCM 9403 / PLM1-5) protein is AMP phosphorylase.